A 353-amino-acid chain; its full sequence is UPF0283 membrane protein YpsIP31758_1791 (353 aa).

Helical transmembrane passes span Met-71 to Val-91, Ile-101 to Val-121, and Glu-214 to Trp-234.

The protein belongs to the UPF0283 family.

Its subcellular location is the cell inner membrane. This is UPF0283 membrane protein YpsIP31758_1791 from Yersinia pseudotuberculosis serotype O:1b (strain IP 31758).